The sequence spans 710 residues: Prolyl endopeptidase (710 aa).

Met1 carries the post-translational modification N-acetylmethionine. Lys157 carries the N6-acetyllysine modification. Active-site charge relay system residues include Ser554, Asp641, and His680.

Belongs to the peptidase S9A family. Expressed in all tissues tested: uterus, kidney, heart, lung, small intestine, smooth muscle, liver, spleen, thymus, adrenal, pituitary and whole brain.

It is found in the cytoplasm. The catalysed reaction is Hydrolysis of Pro-|-Xaa &gt;&gt; Ala-|-Xaa in oligopeptides.. Its activity is regulated as follows. Inhibited by DFP, Z-Pro-prolinal and poststatin, but not by PMSF, SBTI, EDTA, leupeptin, E-64 and pepstatin. Its function is as follows. Cleaves peptide bonds on the C-terminal side of prolyl residues within peptides that are up to approximately 30 amino acids long. Has high activity on the succinyl- (suc-) peptide-4-methylcoumaryl-7-amide (MCA) substrates suc-Gly-Pro-Leu-Gly-Pro-MCA, suc-Gly-Pro-MCA and suc-Ala-Ala-Ala-MCA. The chain is Prolyl endopeptidase from Rattus norvegicus (Rat).